A 344-amino-acid chain; its full sequence is Phenylalanine--tRNA ligase alpha subunit (344 aa).

Glutamate 256 is a binding site for Mg(2+).

This sequence belongs to the class-II aminoacyl-tRNA synthetase family. Phe-tRNA synthetase alpha subunit type 1 subfamily. In terms of assembly, tetramer of two alpha and two beta subunits. Mg(2+) is required as a cofactor.

The protein localises to the cytoplasm. It catalyses the reaction tRNA(Phe) + L-phenylalanine + ATP = L-phenylalanyl-tRNA(Phe) + AMP + diphosphate + H(+). The protein is Phenylalanine--tRNA ligase alpha subunit (pheS) of Bacillus subtilis (strain 168).